A 214-amino-acid polypeptide reads, in one-letter code: N-(5'-phosphoribosyl)anthranilate isomerase (214 aa).

The protein belongs to the TrpF family.

It carries out the reaction N-(5-phospho-beta-D-ribosyl)anthranilate = 1-(2-carboxyphenylamino)-1-deoxy-D-ribulose 5-phosphate. It participates in amino-acid biosynthesis; L-tryptophan biosynthesis; L-tryptophan from chorismate: step 3/5. In Haloarcula marismortui (strain ATCC 43049 / DSM 3752 / JCM 8966 / VKM B-1809) (Halobacterium marismortui), this protein is N-(5'-phosphoribosyl)anthranilate isomerase.